A 139-amino-acid chain; its full sequence is Large ribosomal subunit protein uL16 (139 aa).

A compositionally biased stretch (basic residues) spans 1–20 (MLMPRRVKHRKQHHPTRRGA). Residues 1–24 (MLMPRRVKHRKQHHPTRRGAAKGG) are disordered.

It belongs to the universal ribosomal protein uL16 family. As to quaternary structure, part of the 50S ribosomal subunit.

Functionally, binds 23S rRNA and is also seen to make contacts with the A and possibly P site tRNAs. In Nocardioides sp. (strain ATCC BAA-499 / JS614), this protein is Large ribosomal subunit protein uL16.